A 217-amino-acid chain; its full sequence is uncharacterized protein (217 aa).

This is an uncharacterized protein from Acidianus sp. F28 (AFV-2).